Here is a 631-residue protein sequence, read N- to C-terminus: MQGGNSGVRKREEEGGGEGAVAAPPAIDFPAESSDLKYDESDVPAELQVLKEPLQQPTFPFAVANQLLLVSLLEHLSHVHEPNPLRSRQVFKLLCQTFIKMGLLSSFTCSDEFSSLRLHHNRAITHLMRSAKERVRQDPCEDVSHIQKIRSREVAFEAQTSRYLNEFEEVAILGKGGYGRVYKVRNKLDGQYYAIKKILIKGATKTDCMKVLREVKVLAGLQHPNIVGYHTAWIEHVHVIQPRADRAAIELPTLEVLSDQEEDREQYDVKNDESSSSSIVFAEPTPEKGKRFGESDTENQNDKSVKYTTSLVIRDSGELESTLELQENDLAGLSTSSIMEQQLPLRRNSHLDDSFTSTEESSEENVNFLGQTEAQYHLMLHIQMQLCELSLWDWIAERNKRSRECVDESACPYVMANVATKIFQELVEGVFYIHNMGIVHRDLKPRNIFLHGPDQQVKIGDFGLACTDILQKNADWTNRNGKRTPTHTSRVGTCLYASPEQLEGSEYDAKSDMYSLGVILLELFQPFGTEMERAEVLTGLRTGQLPESLSKRCPVQAKYIQHLTRRNSSQRPSAVQLLQSELFQTSGNVNFTLQMKIIEQEKEIAELKKQLNLLSQDKGVRDDGKDGGVPV.

The segment at 1–34 (MQGGNSGVRKREEEGGGEGAVAAPPAIDFPAESS) is disordered. Positions 85-104 (LRSRQVFKLLCQTFIKMGLL) match the SIFI-degron motif. The 417-residue stretch at 167–583 (FEEVAILGKG…AVQLLQSELF (417 aa)) folds into the Protein kinase domain. ATP-binding positions include 173 to 181 (LGKGGYGRV) and lysine 196. Residues 260–301 (QEEDREQYDVKNDESSSSSIVFAEPTPEKGKRFGESDTENQN) form a disordered region. Threonine 285 bears the Phosphothreonine mark. A compositionally biased stretch (basic and acidic residues) spans 285 to 301 (TPEKGKRFGESDTENQN). The stretch at 410–415 (ACPYVM) is one HRM 1 repeat. Catalysis depends on aspartate 442, which acts as the Proton acceptor. Residues threonine 486 and threonine 488 each carry the phosphothreonine; by autocatalysis modification. Phosphothreonine is present on threonine 493. Residues 552–557 (RCPVQA) form an HRM 2 repeat.

It belongs to the protein kinase superfamily. Ser/Thr protein kinase family. GCN2 subfamily. As to quaternary structure, synthesized in an inactive form that binds to the N-terminal domain of CDC37. Has to be associated with a multiprotein complex containing Hsp90, CDC37 and PPP5C for maturation and activation by autophosphorylation. The phosphatase PPP5C modulates this activation. Homodimer; homodimerizes in presence of heme, forming a disulfide-linked inactive homodimer. Interacts with DELE1; binds both to full-length DELE1 and processed form of DELE1 (S-DELE1) in response to stress, leading to activate its protein kinase activity and trigger the integrated stress response (ISR). Activated by autophosphorylation; phosphorylated predominantly on serine and threonine residues, but also on tyrosine residues. Autophosphorylation at Thr-488 is required for kinase activation. The active autophosphorylated form apparently is largely refractory to cellular heme fluctuations. In terms of processing, ubiquitinated and degraded by the SIFI complex once the mitochondrial stress has been resolved, thereby providing stress response silencing. Within the SIFI complex, UBR4 initiates ubiquitin chain that are further elongated or branched by KCMF1.

Its subcellular location is the cytoplasm. The catalysed reaction is L-seryl-[protein] + ATP = O-phospho-L-seryl-[protein] + ADP + H(+). It carries out the reaction L-threonyl-[protein] + ATP = O-phospho-L-threonyl-[protein] + ADP + H(+). With respect to regulation, in normal conditions, the protein kinase activity is inhibited; inhibition is relieved by various stress conditions. Inhibited by heme: in presence of heme, forms a disulfide-linked inactive homodimer. Heme depletion relieves inhibition and stimulates kinase activity by autophosphorylation. Inhibited by the heme metabolites biliverdin and bilirubin. Induced by oxidative stress generated by arsenite treatment. Binding of nitric oxide (NO) to the heme iron in the N-terminal heme-binding domain activates the kinase activity, while binding of carbon monoxide (CO) suppresses kinase activity. Protein kinase activity is also activated upon binding to DELE1 in response to various stress, triggering the integrated stress response (ISR): activated by full-length DELE1 in response to iron deficiency, while it is activated by the processed form of DELE1 (S-DELE1) in response to mitochondrial stress. Metabolic-stress sensing protein kinase that phosphorylates the alpha subunit of eukaryotic translation initiation factor 2 (EIF2S1/eIF-2-alpha) in response to various stress conditions. Key activator of the integrated stress response (ISR) required for adaptation to various stress, such as heme deficiency, oxidative stress, osmotic shock, mitochondrial dysfunction and heat shock. EIF2S1/eIF-2-alpha phosphorylation in response to stress converts EIF2S1/eIF-2-alpha in a global protein synthesis inhibitor, leading to a global attenuation of cap-dependent translation, while concomitantly initiating the preferential translation of ISR-specific mRNAs, such as the transcriptional activator ATF4, and hence allowing ATF4-mediated reprogramming. Acts as a key sensor of heme-deficiency: in normal conditions, binds hemin via a cysteine thiolate and histidine nitrogenous coordination, leading to inhibit the protein kinase activity. This binding occurs with moderate affinity, allowing it to sense the heme concentration within the cell: heme depletion relieves inhibition and stimulates kinase activity, activating the ISR. Thanks to this unique heme-sensing capacity, plays a crucial role to shut off protein synthesis during acute heme-deficient conditions. In red blood cells (RBCs), controls hemoglobin synthesis ensuring a coordinated regulation of the synthesis of its heme and globin moieties. It thereby plays an essential protective role for RBC survival in anemias of iron deficiency. Iron deficiency also triggers activation by full-length DELE1. Also activates the ISR in response to mitochondrial dysfunction: HRI/EIF2AK1 protein kinase activity is activated upon binding to the processed form of DELE1 (S-DELE1), thereby promoting the ATF4-mediated reprogramming. Also acts as an activator of mitophagy in response to mitochondrial damage: catalyzes phosphorylation of eIF-2-alpha (EIF2S1) following activation by S-DELE1, thereby promoting mitochondrial localization of EIF2S1, triggering PRKN-independent mitophagy. The polypeptide is Eukaryotic translation initiation factor 2-alpha kinase 1 (Macaca fascicularis (Crab-eating macaque)).